A 156-amino-acid polypeptide reads, in one-letter code: Snaclec A3 (156 aa).

An N-terminal signal peptide occupies residues 1–23 (MGRSISVSFGLLVVFLSLSGTGA). 3 cysteine pairs are disulfide-bonded: Cys-27/Cys-38, Cys-55/Cys-154, and Cys-129/Cys-146. One can recognise a C-type lectin domain in the interval 34–155 (HEGHCYKVFN…CGQPYRFTCE (122 aa)).

The protein belongs to the snaclec family. As to quaternary structure, heterodimer; disulfide-linked. As to expression, expressed by the venom gland.

The protein resides in the secreted. In terms of biological role, interferes with one step of hemostasis (modulation of platelet aggregation, or coagulation cascade, for example). The chain is Snaclec A3 from Macrovipera lebetinus (Levantine viper).